A 139-amino-acid chain; its full sequence is Early placenta insulin-like peptide (139 aa).

The first 25 residues, 1-25, serve as a signal peptide directing secretion; it reads MASLFRSYLPAIWLLLSQLLRESLA. 3 disulfides stabilise this stretch: Cys31-Cys125, Cys43-Cys138, and Cys124-Cys129. Positions 59–114 are cleaved as a propeptide — c peptide; it reads LESGRPKEMVSTSNNKDGQALGTTSEFIPNLSPELKKPLSEGQPSLKKIILSRKKR.

Belongs to the insulin family. In terms of tissue distribution, expressed in placenta, uterus and in fetal perichondrium. Expression levels were increased in both early placentas and molar pregnancies and were reduced in choriocarcinoma cells.

It localises to the secreted. Functionally, may play an important role in trophoblast development and in the regulation of bone formation. In Homo sapiens (Human), this protein is Early placenta insulin-like peptide (INSL4).